The primary structure comprises 636 residues: Signal recognition particle receptor subunit alpha (636 aa).

Disordered regions lie at residues A132–K205, I217–V246, and I280–T314. Basic and acidic residues-rich tracts occupy residues K137 to K146 and I153 to K165. S177 carries the phosphoserine modification. Positions I217 to E238 are enriched in basic and acidic residues. A Phosphothreonine modification is found at T283. Phosphoserine occurs at positions 295, 296, and 297. Over residues A302–K312 the composition is skewed to polar residues. T303 carries the post-translational modification Phosphothreonine. Residues Y417–M634 are NG domain. GTP contacts are provided by residues G423 to S430 and D518 to R522. T576 carries the phosphothreonine modification. A GTP-binding site is contributed by T586–D589.

Belongs to the GTP-binding SRP family. In terms of assembly, heterodimer with SRPRB. Interacts with the signal recognition particle (SRP) complex subunit SRP54.

It is found in the endoplasmic reticulum membrane. Component of the SRP (signal recognition particle) receptor. Ensures, in conjunction with the signal recognition particle, the correct targeting of the nascent secretory proteins to the endoplasmic reticulum membrane system. Forms a guanosine 5'-triphosphate (GTP)-dependent complex with the SRP subunit SRP54. SRP receptor compaction and GTPase rearrangement drive SRP-mediated cotranslational protein translocation into the ER. This is Signal recognition particle receptor subunit alpha from Mus musculus (Mouse).